We begin with the raw amino-acid sequence, 164 residues long: Interferon gamma (164 aa).

The signal sequence occupies residues 1–19 (MTCQTYCLFVLSVIMIYFG). Residues N42, N61, and N95 are each glycosylated (N-linked (GlcNAc...) asparagine).

It belongs to the type II (or gamma) interferon family. In terms of assembly, homodimer.

The protein resides in the secreted. Produced by lymphocytes activated by specific antigens or mitogens. IFN-gamma, in addition to having antiviral activity, has important immunoregulatory functions. It is a potent activator of macrophages, it has antiproliferative effects on transformed cells and it can potentiate the antiviral and antitumor effects of the type I interferons. In Anas platyrhynchos (Mallard), this protein is Interferon gamma (IFNG).